The sequence spans 449 residues: Guanine/hypoxanthine permease GhxP (449 aa).

Residues 1–25 (MSTPSARTGGSLDAWFKISQRGSTV) lie on the Cytoplasmic side of the membrane. The helical transmembrane segment at 26-49 (RQEVVAGLTTFLAMVYSVIVVPGM) threads the bilayer. The Periplasmic segment spans residues 50–59 (LGKAGFPPAA). A helical transmembrane segment spans residues 60-78 (VFVATCLVAGLGSIVMGLW). Residues 79–80 (AN) are Cytoplasmic-facing. The chain crosses the membrane as a discontinuously helical span at residues 81 to 97 (LPLAIGCAISLTAFTAF). The Periplasmic segment spans residues 98–109 (SLVLGQHISVPV). Residues 110–129 (ALGAVFLMGVLFTVISATGI) form a helical membrane-spanning segment. Residues 130–141 (RSWILRNLPHGV) lie on the Cytoplasmic side of the membrane. Residues 142–162 (AHGTGIGIGLFLLLIAANGVG) form a helical membrane-spanning segment. Residues 163-180 (LVIKNPLDGLPVALGDFA) lie on the Periplasmic side of the membrane. The helical transmembrane segment at 181 to 198 (TFPVIMSLVGLAVIIGLE) threads the bilayer. Residues 199–202 (KLKV) lie on the Cytoplasmic side of the membrane. A helical transmembrane segment spans residues 203 to 222 (PGGILLTIIGISIVGLIFDP). At 223-254 (NVHFSGVFAMPSLSDENGNSLIGSLDIMGALN) the chain is on the periplasmic side. A helical transmembrane segment spans residues 255 to 283 (PVVLPSVLALVMTAVFDATGTIRAVAGQA). Over 284-296 (NLLDKDGQIIDGG) the chain is Cytoplasmic. Residues 297–312 (KALTTDSMSSVFSGLV) traverse the membrane as a helical segment. Over 313-314 (GA) the chain is Periplasmic. The discontinuously helical transmembrane segment at 315–330 (APAAVYIESAAGTAAG) threads the bilayer. The Cytoplasmic portion of the chain corresponds to 331–334 (GKTG). The helical transmembrane segment at 335–349 (LTAITVGVLFLLILF) threads the bilayer. Residues 350–360 (LSPLSYLVPGY) lie on the Periplasmic side of the membrane. The helical transmembrane segment at 361–380 (ATAPALMYVGLLMLSNVAKI) threads the bilayer. The Cytoplasmic segment spans residues 381-385 (DFADF). The discontinuously helical intramembrane region spans 386-421 (VDAMAGLVTAVFIVLTCNIVTGIMIGFATLVIGRLV). Over 422–449 (SGEWRKLNIGTVVIAVALVTFYAGGWAI) the chain is Cytoplasmic.

This sequence belongs to the nucleobase:cation symporter-2 (NCS2) (TC 2.A.40) family. Azg-like subfamily.

The protein localises to the cell inner membrane. High-affinity transporter for guanine and hypoxanthine. The polypeptide is Guanine/hypoxanthine permease GhxP (ghxP) (Escherichia coli O157:H7).